The chain runs to 150 residues: Arginine repressor (150 aa).

This sequence belongs to the ArgR family.

The protein localises to the cytoplasm. It functions in the pathway amino-acid biosynthesis; L-arginine biosynthesis [regulation]. Its function is as follows. Regulates arginine biosynthesis genes. The protein is Arginine repressor of Clostridium botulinum (strain ATCC 19397 / Type A).